An 81-amino-acid chain; its full sequence is MANIKSQEKRVLTNEKSRLANKAFKSEIKTAIKKALNAKSNDDANKAELVNHAVSLVDKGLKKGIFKDNKAAREKSRLMSA.

The protein belongs to the bacterial ribosomal protein bS20 family.

Binds directly to 16S ribosomal RNA. This Mycoplasma mycoides subsp. mycoides SC (strain CCUG 32753 / NCTC 10114 / PG1) protein is Small ribosomal subunit protein bS20.